We begin with the raw amino-acid sequence, 296 residues long: Ethanolamine ammonia-lyase small subunit (296 aa).

Adenosylcob(III)alamin-binding residues include Val209 and Glu230.

Belongs to the EutC family. As to quaternary structure, the basic unit is a heterodimer which dimerizes to form tetramers. The heterotetramers trimerize; 6 large subunits form a core ring with 6 small subunits projecting outwards. Requires adenosylcob(III)alamin as cofactor.

The protein localises to the bacterial microcompartment. It carries out the reaction ethanolamine = acetaldehyde + NH4(+). It participates in amine and polyamine degradation; ethanolamine degradation. Functionally, catalyzes the deamination of various vicinal amino-alcohols to oxo compounds. Allows this organism to utilize ethanolamine as the sole source of nitrogen and carbon in the presence of external vitamin B12. This is Ethanolamine ammonia-lyase small subunit from Lachnoclostridium phytofermentans (strain ATCC 700394 / DSM 18823 / ISDg) (Clostridium phytofermentans).